The chain runs to 116 residues: Putative membrane protein insertion efficiency factor (116 aa).

This sequence belongs to the UPF0161 family.

It is found in the cell inner membrane. In terms of biological role, could be involved in insertion of integral membrane proteins into the membrane. The polypeptide is Putative membrane protein insertion efficiency factor (Bartonella tribocorum (strain CIP 105476 / IBS 506)).